A 596-amino-acid polypeptide reads, in one-letter code: Bromodomain-containing protein 9 (596 aa).

Basic residues predominate over residues 1-10; that stretch reads MGKKHKKHKA. 2 disordered regions span residues 1–26 and 38–137; these read MGKK…PLEK and EVTE…AENE. The span at 50–62 shows a compositional bias: basic and acidic residues; sequence SYYDDRSDHERER. At serine 56 the chain carries Phosphoserine. Residues 63 to 73 are compositionally biased toward basic residues; sequence HREKKKKKKKK. The span at 74-85 shows a compositional bias: basic and acidic residues; it reads SEKEKHLDEEER. The span at 86 to 97 shows a compositional bias: basic residues; the sequence is RKRKEEKKRKRE. A compositionally biased stretch (basic and acidic residues) spans 111 to 126; sequence DPGKKVEVEPPPDRPV. The region spanning 136-240 is the Bromo domain; the sequence is NESTPIQRLL…HAGFKMMSKA (105 aa). A histone H4K5ac H4K8ac and histone H4K5bu H4K8bu binding region spans residues 214–216; it reads TYN. Position 372 is an N6-acetyllysine; alternate (lysine 372). A Glycyl lysine isopeptide (Lys-Gly) (interchain with G-Cter in SUMO2); alternate cross-link involves residue lysine 372. The interval 536–596 is disordered; that stretch reads AQAERGGSRP…SPEPAAPAKN (61 aa). Residues 543 to 555 show a composition bias toward low complexity; the sequence is SRPSSNLSSLSTA. Phosphoserine occurs at positions 565 and 587.

As to quaternary structure, binds acetylated histones H3 and H4. Binds butyrylated histone H4. Component of the multiprotein chromatin-remodeling subcomplex SWI/SNF called GBAF, which includes at least BICRA or BICRAL (mutually exclusive), BRD9, SS18, the core BAF subunits, SMARCA2/BRM, SMARCA4/BRG1/BAF190A, ACTL6A/BAF53, SMARCC1/BAF155, and SMARCD1/BAF60A. Interacts (via N-terminal bromodomain) with acetylated RAD54. Interacts (via C-terminus) with RAD51.

It is found in the nucleus. In terms of biological role, plays a role in chromatin remodeling and regulation of transcription. Acts as a chromatin reader that recognizes and binds acylated histones: binds histones that are acetylated and/or butyrylated. Component of SWI/SNF chromatin remodeling subcomplex GBAF that carries out key enzymatic activities, changing chromatin structure by altering DNA-histone contacts within a nucleosome in an ATP-dependent manner. Also orchestrates the RAD51-RAD54 complex formation and thereby plays a role in homologous recombination (HR). In Mus musculus (Mouse), this protein is Bromodomain-containing protein 9 (Brd9).